Here is a 164-residue protein sequence, read N- to C-terminus: Transcription elongation factor GreA (164 aa).

The stretch at 15–76 (DRLKNELDQL…LQELLNSAKV (62 aa)) forms a coiled coil.

Belongs to the GreA/GreB family.

Functionally, necessary for efficient RNA polymerase transcription elongation past template-encoded arresting sites. The arresting sites in DNA have the property of trapping a certain fraction of elongating RNA polymerases that pass through, resulting in locked ternary complexes. Cleavage of the nascent transcript by cleavage factors such as GreA or GreB allows the resumption of elongation from the new 3'terminus. GreA releases sequences of 2 to 3 nucleotides. This chain is Transcription elongation factor GreA, found in Rhodococcus erythropolis (strain PR4 / NBRC 100887).